We begin with the raw amino-acid sequence, 157 residues long: MQKIGIYPGTFDPVTNGHIDIIHRSSELFEKLIVAVAHSSAKNPMFSLDERLKMMQLATKSFKNVECVAFEGLLADLAKEYHCKVLVRGLRVVSDFEYELQMGYANKSLNHELETLYFMPTLQNAFISSSIVRSIIAHKGDASHLVPKEIYPFISKV.

A substrate-binding site is contributed by T10. Residues 10–11 (TF) and H18 contribute to the ATP site. Residues K42, L74, and R88 each contribute to the substrate site. ATP is bound by residues 89–91 (GLR), E99, and 124–130 (NAFISSS).

This sequence belongs to the bacterial CoaD family. In terms of assembly, homohexamer. Requires Mg(2+) as cofactor.

The protein localises to the cytoplasm. The catalysed reaction is (R)-4'-phosphopantetheine + ATP + H(+) = 3'-dephospho-CoA + diphosphate. It participates in cofactor biosynthesis; coenzyme A biosynthesis; CoA from (R)-pantothenate: step 4/5. Its function is as follows. Reversibly transfers an adenylyl group from ATP to 4'-phosphopantetheine, yielding dephospho-CoA (dPCoA) and pyrophosphate. This is Phosphopantetheine adenylyltransferase from Helicobacter pylori (strain J99 / ATCC 700824) (Campylobacter pylori J99).